A 330-amino-acid chain; its full sequence is Carbonic anhydrase 1 (330 aa).

A chloroplast transit peptide-like region spans residues 1 to 109; sequence MSTASAFAIN…AAARIDQITA (109 aa).

This sequence belongs to the beta-class carbonic anhydrase family. As to quaternary structure, homohexamer.

The protein localises to the cytoplasm. The catalysed reaction is hydrogencarbonate + H(+) = CO2 + H2O. In terms of biological role, reversible hydration of carbon dioxide. In Flaveria linearis (Narrowleaf yellowtops), this protein is Carbonic anhydrase 1.